A 465-amino-acid polypeptide reads, in one-letter code: uncharacterized protein (465 aa).

The region spanning 13–71 is the TRAM domain; the sequence is GPRPGLRLELQAIDLDRDGHGLARWQGWVVVVPGLLPGERAKVQLQQRQKSRWLSRISE. Residues Cys84, Cys90, Cys93, and Cys171 each contribute to the [4Fe-4S] cluster site. The S-adenosyl-L-methionine site is built by Gln294, Tyr324, Glu345, and Asp391. Cys418 (nucleophile) is an active-site residue.

This sequence belongs to the class I-like SAM-binding methyltransferase superfamily. RNA M5U methyltransferase family.

This is an uncharacterized protein from Parasynechococcus marenigrum (strain WH8102).